Reading from the N-terminus, the 270-residue chain is tRNA pseudouridine synthase A (270 aa).

Asp51 serves as the catalytic Nucleophile. Position 109 (Tyr109) interacts with substrate.

This sequence belongs to the tRNA pseudouridine synthase TruA family. In terms of assembly, homodimer.

The catalysed reaction is uridine(38/39/40) in tRNA = pseudouridine(38/39/40) in tRNA. In terms of biological role, formation of pseudouridine at positions 38, 39 and 40 in the anticodon stem and loop of transfer RNAs. This chain is tRNA pseudouridine synthase A, found in Burkholderia orbicola (strain MC0-3).